The sequence spans 416 residues: DNA-guanine transglycosylase (416 aa).

The Proton acceptor role is filled by Asp-95. The Nucleophile role is filled by Asp-256. Zn(2+) is bound by residues Cys-368, Cys-370, Cys-373, and His-395.

The protein belongs to the DNA-guanine transglycosylase family. Requires Zn(2+) as cofactor.

Part of the dpd cluster involved in the insertion of 7-deazaguanine derivatives in DNA. DpdA may insert 7-cyano-7-deazaguanine (preQ0) into DNA with the help of DpdB. DpdA and dpdB are necessary and sufficient to synthesize 2'-deoxy-7-cyano-7-deazaguanosine (dPreQ0). The sequence is that of DNA-guanine transglycosylase from Salmonella montevideo.